Consider the following 244-residue polypeptide: Small ribosomal subunit protein uS3 (244 aa).

The KH type-2 domain occupies isoleucine 38–lysine 106. The segment covering threonine 222–lysine 235 has biased composition (basic and acidic residues). A disordered region spans residues threonine 222–arginine 244.

It belongs to the universal ribosomal protein uS3 family. As to quaternary structure, part of the 30S ribosomal subunit. Forms a tight complex with proteins S10 and S14.

Functionally, binds the lower part of the 30S subunit head. Binds mRNA in the 70S ribosome, positioning it for translation. The polypeptide is Small ribosomal subunit protein uS3 (Parabacteroides distasonis (strain ATCC 8503 / DSM 20701 / CIP 104284 / JCM 5825 / NCTC 11152)).